Consider the following 225-residue polypeptide: Cytidylate kinase (225 aa).

Residue 11-19 coordinates ATP; that stretch reads GPAGAGKGT. Over residues 169 to 185 the composition is skewed to basic and acidic residues; that stretch reads MDRIKSRIEERDARDQS. The disordered stretch occupies residues 169 to 195; it reads MDRIKSRIEERDARDQSRATAPLAAAP.

It belongs to the cytidylate kinase family. Type 1 subfamily.

It is found in the cytoplasm. It carries out the reaction CMP + ATP = CDP + ADP. It catalyses the reaction dCMP + ATP = dCDP + ADP. This chain is Cytidylate kinase, found in Magnetococcus marinus (strain ATCC BAA-1437 / JCM 17883 / MC-1).